The sequence spans 193 residues: Ion-translocating oxidoreductase complex subunit A (193 aa).

6 helical membrane passes run 5 to 25 (LLLF…FLGL), 47 to 67 (FVMT…LVPL), 72 to 92 (LRTM…EMVV), 102 to 122 (LLGI…VALL), 134 to 154 (ALYG…FAAI), and 171 to 191 (AIAL…SGLV).

Belongs to the NqrDE/RnfAE family. As to quaternary structure, the complex is composed of six subunits: RnfA, RnfB, RnfC, RnfD, RnfE and RnfG.

It is found in the cell inner membrane. Functionally, part of a membrane-bound complex that couples electron transfer with translocation of ions across the membrane. This chain is Ion-translocating oxidoreductase complex subunit A, found in Cronobacter sakazakii (strain ATCC BAA-894) (Enterobacter sakazakii).